The sequence spans 1275 residues: Serine/threonine-protein kinase ULK4 (1275 aa).

Residues 4 to 280 form the Protein kinase domain; the sequence is FILYEEIGRG…WTRLLQHSFW (277 aa). Disordered stretches follow at residues 299 to 350 and 364 to 392; these read SRNT…KSTL and RPTPRTSTAVEVSPGEDMTHCSPQKTSPL. The span at 336–348 shows a compositional bias: basic and acidic residues; sequence FRLENPTEFRPKS. The span at 364-373 shows a compositional bias: polar residues; it reads RPTPRTSTAV. 5 HEAT repeats span residues 842 to 880, 926 to 964, 1025 to 1063, 1151 to 1189, and 1213 to 1253; these read LKLCLPLMPVVLHLVTSQVFRPQVVTEEFLFSYGTILSH, STVVDYILPPLVSLVQSQNVEWRLFSLRLLSETTSLLVN, LVEESKLIPLIFEVTLEHQESILGNTMQSVIALLSNLVA, NRPLTDLISLLIPLLPNEDPEIFDVSSKCLSILVQLYGG, and PKEQ…LAPG.

This sequence belongs to the protein kinase superfamily. Ser/Thr protein kinase family. APG1/unc-51/ULK1 subfamily. In terms of tissue distribution, expressed in the brain, mainly in postmitotic neurons, including GABAergic neurons, but not in astrocytes (at protein level).

It carries out the reaction L-seryl-[protein] + ATP = O-phospho-L-seryl-[protein] + ADP + H(+). The enzyme catalyses L-threonyl-[protein] + ATP = O-phospho-L-threonyl-[protein] + ADP + H(+). Its function is as follows. May be involved in the remodeling of cytoskeletal components, such as alpha-tubulin, and in this way regulates neurite branching and elongation, as well as cell motility. This chain is Serine/threonine-protein kinase ULK4 (ULK4), found in Homo sapiens (Human).